A 680-amino-acid polypeptide reads, in one-letter code: Chondroitin proteoglycan 4 (680 aa).

The first 18 residues, 1–18 (MLRVNLLILLCFVPFSLN), serve as a signal peptide directing secretion. N-linked (GlcNAc...) asparagine glycans are attached at residues Asn42, Asn59, Asn72, Asn167, Asn205, Asn458, Asn472, Asn486, Asn498, Asn526, Asn527, Asn556, and Asn604. Residues 460–680 (TKKAETTKKS…PLTTTLHELY (221 aa)) are disordered. Low complexity predominate over residues 484 to 500 (AANTTAETTKTTSANIT). Over residues 520 to 530 (SLDTSGNNSTV) the composition is skewed to polar residues. 2 stretches are compositionally biased toward low complexity: residues 633-647 (GEAS…SGEV) and 654-669 (SGYS…SSGE). O-linked (Xyl...) (chondroitin sulfate) serine glycans are attached at residues Ser640 and Ser644. An N-linked (GlcNAc...) asparagine glycan is attached at Asn664.

This chain is Chondroitin proteoglycan 4 (cpg-4), found in Caenorhabditis briggsae.